Consider the following 620-residue polypeptide: Arginine--tRNA ligase (620 aa).

Residues 147–157 carry the 'HIGH' region motif; sequence ANPTGPIHIGG.

Belongs to the class-I aminoacyl-tRNA synthetase family. In terms of assembly, monomer.

The protein localises to the cytoplasm. The enzyme catalyses tRNA(Arg) + L-arginine + ATP = L-arginyl-tRNA(Arg) + AMP + diphosphate. This Bifidobacterium longum subsp. infantis (strain ATCC 15697 / DSM 20088 / JCM 1222 / NCTC 11817 / S12) protein is Arginine--tRNA ligase.